Consider the following 754-residue polypeptide: C2H2 finger domain transcription factor crzA (754 aa).

5 disordered regions span residues 1-51 (MASQ…TVTG), 63-150 (SFAN…FSDL), 187-227 (VHQQ…QGST), 269-299 (QGHR…FDGV), and 384-543 (GAEG…RVQK). Over residues 30–44 (HQQQQQQQHQQHQGQ) the composition is skewed to low complexity. 2 stretches are compositionally biased toward polar residues: residues 63–80 (SFAN…SPSA) and 94–114 (TPAS…QSYG). Over residues 130–140 (QQQSQQQHHQQ) the composition is skewed to low complexity. Over residues 141–150 (PSLDDNFSDL) the composition is skewed to polar residues. A compositionally biased stretch (low complexity) spans 189–209 (QQSHPTQIPSSHSSTSPQISP). Polar residues-rich tracts occupy residues 210-227 (LEQQ…QGST) and 279-293 (SEIS…LSQH). Low complexity-rich tracts occupy residues 459–472 (STSR…SSSL) and 491–515 (RQQQ…STSS). 2 C2H2-type zinc fingers span residues 548–570 (FQCN…LRTH) and 576–598 (FVCT…EGLH). A C2H2-type 3; degenerate zinc finger spans residues 604–635 (FVCQGELSRGGQWGCGRRFARADALGRHFRSE). Positions 708-737 (ADDPSDIGGRSSFDASSGNEFGFEDDDSGL) are disordered.

It localises to the nucleus. It is found in the cytoplasm. In terms of biological role, transcription factor involved in the regulation of calcium ion homeostasis. Regulates genes encoding calcium transporters, transcription factors and genes that could be directly or indirectly involved in calcium metabolism. Supports especially pmcA, pmcB and pmcC expression encoding for calcium-translocating P-type ATPases. Binds target promoters at motif A[GT][CG]CA[AC][AG]. Plays an essential role germination, radial growth, and asexual development. Also plays a major role in proper chitin and glucan incorporation into the cell wall. Involved in the high-osmolarity glycerol response (HOG) signaling pathway. Required for pathogenicity in an experimental murine model of invasive pulmonary aspergillosis. This is C2H2 finger domain transcription factor crzA from Aspergillus fumigatus (strain ATCC MYA-4609 / CBS 101355 / FGSC A1100 / Af293) (Neosartorya fumigata).